The primary structure comprises 143 residues: Nucleoside diphosphate kinase (143 aa).

ATP-binding residues include K11, F59, R87, T93, R104, and N114. H117 functions as the Pros-phosphohistidine intermediate in the catalytic mechanism.

The protein belongs to the NDK family. Homotetramer. Mg(2+) serves as cofactor.

The protein localises to the cytoplasm. It catalyses the reaction a 2'-deoxyribonucleoside 5'-diphosphate + ATP = a 2'-deoxyribonucleoside 5'-triphosphate + ADP. The catalysed reaction is a ribonucleoside 5'-diphosphate + ATP = a ribonucleoside 5'-triphosphate + ADP. Its function is as follows. Major role in the synthesis of nucleoside triphosphates other than ATP. The ATP gamma phosphate is transferred to the NDP beta phosphate via a ping-pong mechanism, using a phosphorylated active-site intermediate. This Shewanella baltica (strain OS223) protein is Nucleoside diphosphate kinase.